A 298-amino-acid chain; its full sequence is Aspartate carbamoyltransferase catalytic subunit (298 aa).

The carbamoyl phosphate site is built by arginine 53 and threonine 54. Lysine 81 is a binding site for L-aspartate. 3 residues coordinate carbamoyl phosphate: arginine 103, histidine 132, and glutamine 135. Positions 166 and 218 each coordinate L-aspartate. Glycine 259 and proline 260 together coordinate carbamoyl phosphate.

This sequence belongs to the aspartate/ornithine carbamoyltransferase superfamily. ATCase family. In terms of assembly, heterododecamer (2C3:3R2) of six catalytic PyrB chains organized as two trimers (C3), and six regulatory PyrI chains organized as three dimers (R2).

The enzyme catalyses carbamoyl phosphate + L-aspartate = N-carbamoyl-L-aspartate + phosphate + H(+). The protein operates within pyrimidine metabolism; UMP biosynthesis via de novo pathway; (S)-dihydroorotate from bicarbonate: step 2/3. Its function is as follows. Catalyzes the condensation of carbamoyl phosphate and aspartate to form carbamoyl aspartate and inorganic phosphate, the committed step in the de novo pyrimidine nucleotide biosynthesis pathway. The chain is Aspartate carbamoyltransferase catalytic subunit from Anaplasma marginale (strain St. Maries).